We begin with the raw amino-acid sequence, 250 residues long: Adenosylcobinamide-GDP ribazoletransferase (250 aa).

Transmembrane regions (helical) follow at residues 33–53 (IASY…LFYI), 63–83 (IVMT…HIDG), 109–129 (LGTN…LFLT), 137–157 (LTAL…SMMI), 180–200 (FAIA…LAVF), and 203–223 (ILTI…LRIG).

This sequence belongs to the CobS family. Mg(2+) serves as cofactor.

The protein resides in the cell membrane. It catalyses the reaction alpha-ribazole + adenosylcob(III)inamide-GDP = adenosylcob(III)alamin + GMP + H(+). It carries out the reaction alpha-ribazole 5'-phosphate + adenosylcob(III)inamide-GDP = adenosylcob(III)alamin 5'-phosphate + GMP + H(+). Its pathway is cofactor biosynthesis; adenosylcobalamin biosynthesis; adenosylcobalamin from cob(II)yrinate a,c-diamide: step 7/7. In terms of biological role, joins adenosylcobinamide-GDP and alpha-ribazole to generate adenosylcobalamin (Ado-cobalamin). Also synthesizes adenosylcobalamin 5'-phosphate from adenosylcobinamide-GDP and alpha-ribazole 5'-phosphate. The sequence is that of Adenosylcobinamide-GDP ribazoletransferase from Thermoanaerobacter sp. (strain X514).